The following is a 233-amino-acid chain: Small ribosomal subunit protein uS2 (233 aa).

The protein belongs to the universal ribosomal protein uS2 family.

The sequence is that of Small ribosomal subunit protein uS2 from Bacillus cereus (strain G9842).